Consider the following 382-residue polypeptide: Mannitol-1-phosphate 5-dehydrogenase (382 aa).

3-14 (ALHFGAGNIGRG) is a binding site for NAD(+). K269 is subject to N6-acetyllysine.

This sequence belongs to the mannitol dehydrogenase family.

It carries out the reaction D-mannitol 1-phosphate + NAD(+) = beta-D-fructose 6-phosphate + NADH + H(+). The sequence is that of Mannitol-1-phosphate 5-dehydrogenase from Escherichia coli O7:K1 (strain IAI39 / ExPEC).